A 339-amino-acid chain; its full sequence is GTPase Era (339 aa).

One can recognise an RPE1 insert domain in the interval 4-48 (RHLAKFAYREEFKGDTEALAAAVREDASTGSTSQLPLEVQFGKMS). In terms of domain architecture, Era-type G spans 51 to 220 (KTVSVCIIGR…ITSKAKISPW (170 aa)). A G1 region spans residues 59 to 66 (GRPNSGKS). 59–66 (GRPNSGKS) contributes to the GTP binding site. The tract at residues 85-89 (QTTRS) is G2. Positions 106–109 (DTPG) are G3. Residues 106–110 (DTPGI) and 168–171 (NKID) each bind GTP. The interval 168–171 (NKID) is G4. Residues 196-198 (ISA) are G5. A KH type-2 domain is found at 248–325 (LQKELPYKLT…HLFLFVKVRE (78 aa)).

It belongs to the TRAFAC class TrmE-Era-EngA-EngB-Septin-like GTPase superfamily. Era GTPase family. Monomer.

The protein resides in the cytoplasm. The protein localises to the cell inner membrane. Its function is as follows. An essential GTPase that binds both GDP and GTP, with rapid nucleotide exchange. Plays a role in 16S rRNA processing and 30S ribosomal subunit biogenesis and possibly also in cell cycle regulation and energy metabolism. The polypeptide is GTPase Era (Rickettsia conorii (strain ATCC VR-613 / Malish 7)).